A 274-amino-acid chain; its full sequence is ATP synthase subunit b 2 (274 aa).

A helical membrane pass occupies residues 2-22; sequence HIDWFVLLAQLVNFLILIYLL.

This sequence belongs to the ATPase B chain family. In terms of assembly, F-type ATPases have 2 components, F(1) - the catalytic core - and F(0) - the membrane proton channel. F(1) has five subunits: alpha(3), beta(3), gamma(1), delta(1), epsilon(1). F(0) has three main subunits: a(1), b(2) and c(10-14). The alpha and beta chains form an alternating ring which encloses part of the gamma chain. F(1) is attached to F(0) by a central stalk formed by the gamma and epsilon chains, while a peripheral stalk is formed by the delta and b chains.

Its subcellular location is the cell inner membrane. Functionally, f(1)F(0) ATP synthase produces ATP from ADP in the presence of a proton or sodium gradient. F-type ATPases consist of two structural domains, F(1) containing the extramembraneous catalytic core and F(0) containing the membrane proton channel, linked together by a central stalk and a peripheral stalk. During catalysis, ATP synthesis in the catalytic domain of F(1) is coupled via a rotary mechanism of the central stalk subunits to proton translocation. In terms of biological role, component of the F(0) channel, it forms part of the peripheral stalk, linking F(1) to F(0). The chain is ATP synthase subunit b 2 from Syntrophus aciditrophicus (strain SB).